The chain runs to 192 residues: Orotate phosphoribosyltransferase (192 aa).

Residue 116-124 coordinates 5-phospho-alpha-D-ribose 1-diphosphate; the sequence is EDVVTTGKS. Orotate is bound by residues Thr-120 and Arg-148.

It belongs to the purine/pyrimidine phosphoribosyltransferase family. PyrE subfamily. As to quaternary structure, homodimer. Mg(2+) is required as a cofactor.

The enzyme catalyses orotidine 5'-phosphate + diphosphate = orotate + 5-phospho-alpha-D-ribose 1-diphosphate. It functions in the pathway pyrimidine metabolism; UMP biosynthesis via de novo pathway; UMP from orotate: step 1/2. Its function is as follows. Catalyzes the transfer of a ribosyl phosphate group from 5-phosphoribose 1-diphosphate to orotate, leading to the formation of orotidine monophosphate (OMP). The chain is Orotate phosphoribosyltransferase from Clostridium perfringens (strain ATCC 13124 / DSM 756 / JCM 1290 / NCIMB 6125 / NCTC 8237 / Type A).